Consider the following 266-residue polypeptide: 22 kDa alpha-zein 8 (266 aa).

Positions 1 to 21 (MATKILALLALLALFVSATNA) are cleaved as a signal peptide.

The protein belongs to the zein family.

Functionally, zeins are major seed storage proteins. The sequence is that of 22 kDa alpha-zein 8 from Zea mays (Maize).